The primary structure comprises 373 residues: Polygalacturonase (373 aa).

The first 24 residues, 1 to 24 (MVRNIVSRLCSQLFALPSSSLQER), serve as a signal peptide directing secretion. Residues cysteine 27 and cysteine 42 are joined by a disulfide bond. Residues asparagine 65 and asparagine 94 are each glycosylated (N-linked (GlcNAc...) asparagine). 8 PbH1 repeats span residues 136 to 158 (TGNSKITNLNIQNWPVHCFDITG), 159 to 197 (SSQLTISGLILDNRAGDKPNAKSGSLPAAHNTDGFDISS), 198 to 219 (SDHVTLDNNHVYNQDDCVAVTS), 220 to 240 (GTNIVVSNMYCSGGHGLSIGS), 249 to 270 (VDGVQFLSSQVVNSQNGCRIKS), 278 to 300 (INNVTYQNIALTNISTYGVDVQQ), 312 to 333 (TNGVKISNIKFIKVTGTVASSA), and 345 to 369 (CSGFTFSGNAITGGGKTSSCNYPTN). Aspartate 212 serves as the catalytic Proton donor. An intrachain disulfide couples cysteine 214 to cysteine 230. The active site involves histidine 234. 2 N-linked (GlcNAc...) asparagine glycosylation sites follow: asparagine 280 and asparagine 290. 2 disulfide bridges follow: cysteine 340–cysteine 345 and cysteine 364–cysteine 371.

Belongs to the glycosyl hydrolase 28 family.

It is found in the secreted. The catalysed reaction is (1,4-alpha-D-galacturonosyl)n+m + H2O = (1,4-alpha-D-galacturonosyl)n + (1,4-alpha-D-galacturonosyl)m.. Functionally, involved in maceration and soft-rotting of plant tissue. Hydrolyzes the 1,4-alpha glycosidic bonds of de-esterified pectate in the smooth region of the plant cell wall. This is Polygalacturonase (PGA) from Fusarium fujikuroi (Bakanae and foot rot disease fungus).